A 389-amino-acid chain; its full sequence is MIRNVVVGVSGGVDSAVSAHLLAEQGFKVLGVFMRNWDEADEVGRCSGEADLKDAEWACRQLGVELRQVNYVREYWTAVFSQFLDDYQMGLTPNPDILCNRHIKFDLFHKHALENLGYDAVATGHYARNSLGNYLEGIASNNDARLLIPADTFKDQTFFLAGISRKALQRTMFPLGDFQKSQVKDLAKKIGFQRLAKKKESTGICFVGKRNFKDFIQEYITSKRGPFLDIDSGAVVGHHEGIHQWTVGQRCRLSSFLQPYFVARKEAASNTIYVASGHNHPALLSTHIAVDPPNWLCSKSQQILSDTGSLRCRFRFQHTKPLVDCQLSISPSNTFLVELDAPLRAITPGQYAVFYDDTACLGSARILSANPLKKKNAQTQQAQAANLVS.

ATP-binding positions include 8–15 and M34; that span reads GVSGGVDS. Positions 94–96 are interaction with target base in tRNA; the sequence is NPD. C99 functions as the Nucleophile in the catalytic mechanism. Residues C99 and C205 are joined by a disulfide bond. ATP is bound at residue G124. The tract at residues 154–156 is interaction with tRNA; sequence KDQ. The active-site Cysteine persulfide intermediate is C205. Positions 317–318 are interaction with tRNA; that stretch reads QH.

Belongs to the MnmA/TRMU family.

Its subcellular location is the mitochondrion. It carries out the reaction 5-taurinomethyluridine(34) in tRNA + S-sulfanyl-L-cysteinyl-[protein] + AH2 + ATP = 5-taurinomethyl-2-thiouridine(34) in tRNA + L-cysteinyl-[protein] + A + AMP + diphosphate + H(+). Its function is as follows. Catalyzes the 2-thiolation of uridine at the wobble position (U34) of mitochondrial tRNA(Lys), tRNA(Glu) and tRNA(Gln). Required for the formation of 5-taurinomethyl-2-thiouridine (tm5s2U) of mitochondrial tRNA(Lys), tRNA(Glu), and tRNA(Gln) at the wobble position. ATP is required to activate the C2 atom of the wobble base. This chain is Mitochondrial tRNA-specific 2-thiouridylase 1, found in Drosophila melanogaster (Fruit fly).